The chain runs to 1149 residues: Potassium channel subfamily U member 1 (1149 aa).

The Extracellular portion of the chain corresponds to 1–24; that stretch reads MFQTKLRNESWEDLQKMSCTTEIQ. The helical transmembrane segment at 25–45 threads the bilayer; it reads VAFILSSFMTFISGLIILLIF. Over 46 to 101 the chain is Cytoplasmic; that stretch reads RLIWRTVKKWQIIKGTGIILELFTSGSIRRNHVRSLHFHGRFRDRIEMLLSAQTFV. The helical transmembrane segment at 102–122 threads the bilayer; that stretch reads GQVLVILVFVLSIGSLIIYFI. At 123-138 the chain is on the extracellular side; sequence NSADPVGSCSSYEDKT. The helical transmembrane segment at 139 to 159 threads the bilayer; the sequence is IPVDLVFNAFFSFYFGLRFMA. Residues 160–163 are Cytoplasmic-facing; it reads ADDK. A helical membrane pass occupies residues 164-184; it reads IKFWLEMNSIVDIFTIPPTFI. The Extracellular segment spans residues 185–188; it reads SYYL. The chain crosses the membrane as a helical; Voltage-sensor span at residues 189 to 209; it reads KSNWLGLRFLRALRLLELPRI. At 210 to 226 the chain is on the cytoplasmic side; that stretch reads LQILRAIKTSNSVKFSK. A helical membrane pass occupies residues 227–247; the sequence is LLSIVLSTWFTAAGFIHLVEN. Topologically, residues 248–259 are extracellular; that stretch reads SGDPWLKGRNSQ. The segment at residues 260 to 282 is an intramembrane region (pore-forming); sequence NISYFDSVYLVMATTSTVGFGDV. Residues 276 to 279 carry the Selectivity for potassium motif; it reads TVGF. Topologically, residues 283 to 291 are extracellular; it reads VAKTSLGRT. The helical transmembrane segment at 292 to 312 threads the bilayer; sequence FIIFFTLGSLILFANYIPEMV. Topologically, residues 313–1149 are cytoplasmic; it reads ELFANKRKYT…EDPFAYSEPL (837 aa). 2 consecutive RCK N-terminal domains span residues 331 to 473 and 713 to 884; these read KKFI…DNII and RNHI…EGSL. Low complexity predominate over residues 829-845; it reads IDSSSDSSPSVSEETAS. 2 disordered regions span residues 829–851 and 1106–1149; these read IDSSSDSSPSVSEETASCTNGHN and ARNQ…SEPL. A compositionally biased stretch (polar residues) spans 1106-1120; that stretch reads ARNQIRTNSSITSQK.

This sequence belongs to the potassium channel family. Calcium-activated (TC 1.A.1.3) subfamily. KCa5.1/KCNU1 sub-subfamily. In terms of assembly, homotetramer; which constitutes the calcium-activated potassium channel. Interacts with LRRC52; this interaction changes some channel gating properties, such as shifting gating to more negative potentials at a given pH. As to expression, testis-specific.

It is found in the cell membrane. The protein resides in the cell projection. The protein localises to the cilium. It localises to the flagellum membrane. It catalyses the reaction K(+)(in) = K(+)(out). Its activity is regulated as follows. Regulated by changes in cytosolic pH; activated by alkalization. VU0546110 acts as a selective inhibitor. The auxiliary subunit LRRC52 shifts the activation of KCNU1 to more negative potentials at a given pH. In terms of biological role, testis-specific potassium channel activated by both intracellular pH and membrane voltage that mediates export of K(+). Represents the primary spermatozoan K(+) current. The channel underlies a pH-triggered membrane hyperpolarization during the process of sperm capacitation, as sperm encounter the alkaline environment near the ovum in the female reproductive tract, thereby playing an essential for male fertility. The protein is Potassium channel subfamily U member 1 (KCNU1) of Macaca fascicularis (Crab-eating macaque).